The chain runs to 134 residues: 6,7-dimethyl-8-ribityllumazine synthase (134 aa).

Residues F12, 44-46 (VFD), and 68-70 (SVI) contribute to the 5-amino-6-(D-ribitylamino)uracil site. 73–74 (DT) is a (2S)-2-hydroxy-3-oxobutyl phosphate binding site. The active-site Proton donor is H76. A 5-amino-6-(D-ribitylamino)uracil-binding site is contributed by L101. Position 116 (R116) interacts with (2S)-2-hydroxy-3-oxobutyl phosphate.

The protein belongs to the DMRL synthase family.

The catalysed reaction is (2S)-2-hydroxy-3-oxobutyl phosphate + 5-amino-6-(D-ribitylamino)uracil = 6,7-dimethyl-8-(1-D-ribityl)lumazine + phosphate + 2 H2O + H(+). It participates in cofactor biosynthesis; riboflavin biosynthesis; riboflavin from 2-hydroxy-3-oxobutyl phosphate and 5-amino-6-(D-ribitylamino)uracil: step 1/2. Its function is as follows. Catalyzes the formation of 6,7-dimethyl-8-ribityllumazine by condensation of 5-amino-6-(D-ribitylamino)uracil with 3,4-dihydroxy-2-butanone 4-phosphate. This is the penultimate step in the biosynthesis of riboflavin. In Methanosarcina barkeri (strain Fusaro / DSM 804), this protein is 6,7-dimethyl-8-ribityllumazine synthase.